The following is a 197-amino-acid chain: Small ribosomal subunit protein uS4 (197 aa).

In terms of domain architecture, S4 RNA-binding spans 87 to 147 (LRLDNVLFRL…EKSKSSARYK (61 aa)).

Belongs to the universal ribosomal protein uS4 family. In terms of assembly, part of the 30S ribosomal subunit. Contacts protein S5. The interaction surface between S4 and S5 is involved in control of translational fidelity.

Its function is as follows. One of the primary rRNA binding proteins, it binds directly to 16S rRNA where it nucleates assembly of the body of the 30S subunit. With S5 and S12 plays an important role in translational accuracy. The sequence is that of Small ribosomal subunit protein uS4 from Lachnospira eligens (strain ATCC 27750 / DSM 3376 / VPI C15-48 / C15-B4) (Eubacterium eligens).